The primary structure comprises 263 residues: Mediator of RNA polymerase II transcription subunit 6 (263 aa).

A compositionally biased stretch (polar residues) spans 163-181 (IHQSTSNPTQGQSSGKSIS). The segment at 163–232 (IHQSTSNPTQ…NGSTSSAESA (70 aa)) is disordered. The span at 182-202 (ATVGNTGTTATPMTMQTPQTV) shows a compositional bias: low complexity.

Belongs to the Mediator complex subunit 6 family. As to quaternary structure, component of the Mediator complex.

The protein resides in the nucleus. In terms of biological role, component of the Mediator complex, a coactivator involved in the regulated transcription of nearly all RNA polymerase II-dependent genes. Mediator functions as a bridge to convey information from gene-specific regulatory proteins to the basal RNA polymerase II transcription machinery. Mediator is recruited to promoters by direct interactions with regulatory proteins and serves as a scaffold for the assembly of a functional preinitiation complex with RNA polymerase II and the general transcription factors. This chain is Mediator of RNA polymerase II transcription subunit 6 (MED6), found in Scheffersomyces stipitis (strain ATCC 58785 / CBS 6054 / NBRC 10063 / NRRL Y-11545) (Yeast).